We begin with the raw amino-acid sequence, 399 residues long: 3-dehydroquinate synthase (399 aa).

Belongs to the archaeal-type DHQ synthase family.

It catalyses the reaction 2-amino-2,3,7-trideoxy-D-lyxo-hept-6-ulosonate + NAD(+) + H2O = 3-dehydroquinate + NH4(+) + NADH + H(+). In terms of biological role, catalyzes the oxidative deamination and cyclization of 2-amino-3,7-dideoxy-D-threo-hept-6-ulosonic acid (ADH) to yield 3-dehydroquinate (DHQ), which is fed into the canonical shikimic pathway of aromatic amino acid biosynthesis. The polypeptide is 3-dehydroquinate synthase (Haloquadratum walsbyi (strain DSM 16790 / HBSQ001)).